The chain runs to 191 residues: Holliday junction branch migration complex subunit RuvA (191 aa).

Residues 1 to 64 (MIGSITGNVE…DNITQLYGFL (64 aa)) form a domain I region. The interval 65–142 (NRQEQDYFKM…KMPIEETFSI (78 aa)) is domain II. The flexible linker stretch occupies residues 143-146 (IEND). The tract at residues 146-191 (DDSLAALISLGYEKLKAFNVIQEIKSKTPDASTQEVIRKALQKLSQ) is domain III.

This sequence belongs to the RuvA family. In terms of assembly, homotetramer. Forms an RuvA(8)-RuvB(12)-Holliday junction (HJ) complex. HJ DNA is sandwiched between 2 RuvA tetramers; dsDNA enters through RuvA and exits via RuvB. An RuvB hexamer assembles on each DNA strand where it exits the tetramer. Each RuvB hexamer is contacted by two RuvA subunits (via domain III) on 2 adjacent RuvB subunits; this complex drives branch migration. In the full resolvosome a probable DNA-RuvA(4)-RuvB(12)-RuvC(2) complex forms which resolves the HJ.

The protein localises to the cytoplasm. The RuvA-RuvB-RuvC complex processes Holliday junction (HJ) DNA during genetic recombination and DNA repair, while the RuvA-RuvB complex plays an important role in the rescue of blocked DNA replication forks via replication fork reversal (RFR). RuvA specifically binds to HJ cruciform DNA, conferring on it an open structure. The RuvB hexamer acts as an ATP-dependent pump, pulling dsDNA into and through the RuvAB complex. HJ branch migration allows RuvC to scan DNA until it finds its consensus sequence, where it cleaves and resolves the cruciform DNA. The sequence is that of Holliday junction branch migration complex subunit RuvA from Ehrlichia ruminantium (strain Gardel).